Here is a 915-residue protein sequence, read N- to C-terminus: Isoleucine--tRNA ligase (915 aa).

Residues 64–74 (PYANGNFHVGH) carry the 'HIGH' region motif. Residue Glu557 participates in L-isoleucyl-5'-AMP binding. The short motif at 598–602 (AMSKS) is the 'KMSKS' region element. ATP is bound at residue Lys601. Zn(2+) is bound by residues Cys887, Cys890, Cys902, and Cys905.

This sequence belongs to the class-I aminoacyl-tRNA synthetase family. IleS type 1 subfamily. Monomer. Requires Zn(2+) as cofactor.

It is found in the cytoplasm. It catalyses the reaction tRNA(Ile) + L-isoleucine + ATP = L-isoleucyl-tRNA(Ile) + AMP + diphosphate. Functionally, catalyzes the attachment of isoleucine to tRNA(Ile). As IleRS can inadvertently accommodate and process structurally similar amino acids such as valine, to avoid such errors it has two additional distinct tRNA(Ile)-dependent editing activities. One activity is designated as 'pretransfer' editing and involves the hydrolysis of activated Val-AMP. The other activity is designated 'posttransfer' editing and involves deacylation of mischarged Val-tRNA(Ile). The chain is Isoleucine--tRNA ligase from Leptospira biflexa serovar Patoc (strain Patoc 1 / ATCC 23582 / Paris).